A 579-amino-acid chain; its full sequence is Type II restriction enzyme FokI (579 aa).

Residues D450, D467, and K469 contribute to the active site.

As to quaternary structure, monomer, in which form it can cleave DNA. Homodimer when bound to DNA. Mg(2+) serves as cofactor.

The enzyme catalyses Endonucleolytic cleavage of DNA to give specific double-stranded fragments with terminal 5'-phosphates.. An S subtype restriction enzyme that recognizes the asymmetric double-stranded sequence 5'-GGATG-3' and cleaves respectively 14 bases after G-1 (top strand) and 13 bases before C-1 (bottom strand). The protein is Type II restriction enzyme FokI of Planomicrobium okeanokoites (Planococcus okeanokoites).